Consider the following 436-residue polypeptide: Chaperone SurA (436 aa).

Residues 1-30 (MKFFQRPERRLKQWGLALLLAASALLPARA) form the signal peptide. 2 consecutive PpiC domains span residues 180–281 (ETEY…KLVD) and 291–389 (VTQT…QVLE).

The protein localises to the periplasm. It carries out the reaction [protein]-peptidylproline (omega=180) = [protein]-peptidylproline (omega=0). In terms of biological role, chaperone involved in the correct folding and assembly of outer membrane proteins. Recognizes specific patterns of aromatic residues and the orientation of their side chains, which are found more frequently in integral outer membrane proteins. May act in both early periplasmic and late outer membrane-associated steps of protein maturation. This Thiobacillus denitrificans (strain ATCC 25259 / T1) protein is Chaperone SurA.